Consider the following 225-residue polypeptide: Golgi to ER traffic protein 1 (225 aa).

Position 1 (M1) is a topological domain, lumenal. The chain crosses the membrane as a helical span at residues 2-21; the sequence is NWVIIAALFFVIINKLLQYT. Topologically, residues 22 to 107 are cytoplasmic; that stretch reads SRYQEAWINK…SQSKLFNRLK (86 aa). Residues 37-104 are a coiled coil; that stretch reads DISSLSKEYS…AKDSQSKLFN (68 aa). A helical membrane pass occupies residues 108–128; the sequence is LLTLTLPFMILKLWKGKFIVY. Residues 129–172 lie on the Lumenal side of the membrane; that stretch reads DIPTKDTFPVIVNGVLSQGLLYIPLLPINFLRGIDPNKHILVPG. The chain crosses the membrane as a helical span at residues 173–189; it reads VSLGIWLMALTKTIDTV. The Cytoplasmic portion of the chain corresponds to 190-225; sequence EFIVKQLVFQPVVSKQVKEKTKEKVVELKTTEAELD.

Belongs to the WRB/GET1 family. As to quaternary structure, component of the Golgi to ER traffic (GET) complex, which is composed of GET1, GET2 and GET3. Within the complex, GET1 and GET2 form a heterotetramer which is stabilized by phosphatidylinositol binding and which binds to the GET3 homodimer.

It localises to the endoplasmic reticulum membrane. It is found in the golgi apparatus membrane. In terms of biological role, required for the post-translational delivery of tail-anchored (TA) proteins to the endoplasmic reticulum. Together with GET2, acts as a membrane receptor for soluble GET3, which recognizes and selectively binds the transmembrane domain of TA proteins in the cytosol. The GET complex cooperates with the HDEL receptor ERD2 to mediate the ATP-dependent retrieval of resident ER proteins that contain a C-terminal H-D-E-L retention signal from the Golgi to the ER. This Vanderwaltozyma polyspora (strain ATCC 22028 / DSM 70294 / BCRC 21397 / CBS 2163 / NBRC 10782 / NRRL Y-8283 / UCD 57-17) (Kluyveromyces polysporus) protein is Golgi to ER traffic protein 1.